Reading from the N-terminus, the 163-residue chain is MTTFLGNPVTFTGKQLQVGDTAHDFSLTATDLSKKTLADFAGKKKVLSIIPSIDTGVCSTQTRRFNQELSDLDNTVVITVSVDLPFAQGKWCAAEGIENAVMLSDYFDHSFGRDYAVLINEWHLLARAVLVLDENNTVTYAEYVDNINTEPDYDAAIAAVKNL.

Positions 16–162 (LQVGDTAHDF…YDAAIAAVKN (147 aa)) constitute a Thioredoxin domain. Residue C58 is the Cysteine sulfenic acid (-SOH) intermediate of the active site. Cysteines 58 and 92 form a disulfide.

Belongs to the peroxiredoxin family. Tpx subfamily. As to quaternary structure, homodimer.

It carries out the reaction a hydroperoxide + [thioredoxin]-dithiol = an alcohol + [thioredoxin]-disulfide + H2O. Thiol-specific peroxidase that catalyzes the reduction of hydrogen peroxide and organic hydroperoxides to water and alcohols, respectively. Plays a role in cell protection against oxidative stress by detoxifying peroxides. This is Thiol peroxidase from Streptococcus gordonii.